The chain runs to 363 residues: Uptake hydrogenase small subunit (363 aa).

The tat-type signal signal peptide spans 1 to 43 (MIETFYEVMRRQGISRRSFLKYCSLTATSLGLSPVFVPKIVHA). [4Fe-4S] cluster-binding residues include C60, C63, C158, C192, H230, C233, C258, and C264. Positions 273, 292, and 295 each coordinate [3Fe-4S] cluster.

It belongs to the [NiFe]/[NiFeSe] hydrogenase small subunit family. In terms of assembly, heterodimer of a large and a small subunit. [4Fe-4S] cluster serves as cofactor. Requires [3Fe-4S] cluster as cofactor. In terms of processing, predicted to be exported by the Tat system. The position of the signal peptide cleavage has not been experimentally proven.

The protein localises to the cell membrane. It carries out the reaction H2 + A = AH2. Functionally, this enzyme recycles the H(2) produced by nitrogenase to increase the production of ATP and to protect nitrogenase against inhibition or damage by O(2) under carbon- or phosphate-limited conditions. This is Uptake hydrogenase small subunit (hupS) from Alcaligenes hydrogenophilus.